Consider the following 122-residue polypeptide: Small ribosomal subunit protein uS13 (122 aa).

Residues 93–122 form a disordered region; that stretch reads RLSLPVRGQRTKTNSRTRKGKRKTVAGKKK. The segment covering 101–122 has biased composition (basic residues); that stretch reads QRTKTNSRTRKGKRKTVAGKKK.

The protein belongs to the universal ribosomal protein uS13 family. Part of the 30S ribosomal subunit. Forms a loose heterodimer with protein S19. Forms two bridges to the 50S subunit in the 70S ribosome.

Its function is as follows. Located at the top of the head of the 30S subunit, it contacts several helices of the 16S rRNA. In the 70S ribosome it contacts the 23S rRNA (bridge B1a) and protein L5 of the 50S subunit (bridge B1b), connecting the 2 subunits; these bridges are implicated in subunit movement. Contacts the tRNAs in the A and P-sites. The protein is Small ribosomal subunit protein uS13 of Chlamydia abortus (strain DSM 27085 / S26/3) (Chlamydophila abortus).